The primary structure comprises 685 residues: N(6)-adenosine-methyltransferase MT-A70-like (685 aa).

S-adenosyl-L-methionine contacts are provided by residues 464-465 (DI) and Asp-482. Residues 552–565 (RIIRTGRTGHWLNH) form a positively charged region required for RNA-binding region. S-adenosyl-L-methionine-binding positions include Lys-599, 622 to 625 (RMHN), and 635 to 636 (NQ). The tract at residues 657 to 685 (EIDVQPPSPPRASAMETDNEPMAIDSITA) is disordered. Position 664 is a phosphoserine (Ser-664).

Belongs to the MT-A70-like family. Interacts with FIP37. Interacts with MTB. Associates with MTB, FIP37, VIR and HAKAI to form the m6A writer complex which is essential for adenosine methylation at specific mRNA sequences.

The protein localises to the nucleus. The catalysed reaction is an adenosine in mRNA + S-adenosyl-L-methionine = an N(6)-methyladenosine in mRNA + S-adenosyl-L-homocysteine + H(+). Functionally, catalytic subunit of the N6-methyltransferase complex, a multiprotein complex that mediates N6-methyladenosine (m6A) methylation at the 5'-[AG]GAC-3' consensus sites of some mRNAs. Associates with MTB, FIP37, VIR and HAKAI to form the m6A writer complex which is essential for adenosine methylation at specific mRNA sequences. N6-methyladenosine (m6A) plays a role in mRNA stability, processing, translation efficiency and editing. This is N(6)-adenosine-methyltransferase MT-A70-like from Arabidopsis thaliana (Mouse-ear cress).